Consider the following 397-residue polypeptide: Arginine biosynthesis bifunctional protein ArgJ (397 aa).

T143, K169, T180, E266, N392, and T397 together coordinate substrate. Catalysis depends on T180, which acts as the Nucleophile.

This sequence belongs to the ArgJ family. In terms of assembly, heterotetramer of two alpha and two beta chains.

The protein resides in the cytoplasm. It carries out the reaction N(2)-acetyl-L-ornithine + L-glutamate = N-acetyl-L-glutamate + L-ornithine. It catalyses the reaction L-glutamate + acetyl-CoA = N-acetyl-L-glutamate + CoA + H(+). Its pathway is amino-acid biosynthesis; L-arginine biosynthesis; L-ornithine and N-acetyl-L-glutamate from L-glutamate and N(2)-acetyl-L-ornithine (cyclic): step 1/1. It participates in amino-acid biosynthesis; L-arginine biosynthesis; N(2)-acetyl-L-ornithine from L-glutamate: step 1/4. Competitively inhibited by L-ornithine. Catalyzes two activities which are involved in the cyclic version of arginine biosynthesis: the synthesis of N-acetylglutamate from glutamate and acetyl-CoA as the acetyl donor, and of ornithine by transacetylation between N(2)-acetylornithine and glutamate. In Thermotoga neapolitana (strain ATCC 49049 / DSM 4359 / NBRC 107923 / NS-E), this protein is Arginine biosynthesis bifunctional protein ArgJ.